Here is a 673-residue protein sequence, read N- to C-terminus: DNA mismatch repair protein MutL (673 aa).

Belongs to the DNA mismatch repair MutL/HexB family.

Functionally, this protein is involved in the repair of mismatches in DNA. It is required for dam-dependent methyl-directed DNA mismatch repair. May act as a 'molecular matchmaker', a protein that promotes the formation of a stable complex between two or more DNA-binding proteins in an ATP-dependent manner without itself being part of a final effector complex. The polypeptide is DNA mismatch repair protein MutL (Ehrlichia chaffeensis (strain ATCC CRL-10679 / Arkansas)).